The chain runs to 554 residues: Protein PNS1 (554 aa).

Composition is skewed to low complexity over residues 1–19 and 27–45; these read MSGP…NNNN and SYQM…QPQY. The interval 1 to 90 is disordered; sequence MSGPQYGAQP…TDGYGGPPPS (90 aa). The Cytoplasmic portion of the chain corresponds to 1–105; the sequence is MSGPQYGAQP…KVQKPKYNDW (105 aa). Over residues 68–90 the composition is skewed to pro residues; the sequence is PQGPPPNGSKPPPTDGYGGPPPS. A helical transmembrane segment spans residues 106 to 126; that stretch reads WAGLLFLATVAGFVAVSAISI. Residues 127 to 153 lie on the Extracellular side of the membrane; it reads HGYADNRSQNNGSLNGQRNTFGLTTHT. N-linked (GlcNAc...) asparagine glycosylation is found at asparagine 132 and asparagine 137. Residues 154-174 form a helical membrane-spanning segment; it reads IYLFVWVLICAIVLSYAYMWM. Topologically, residues 175 to 181 are cytoplasmic; that stretch reads ARKFTKQ. The chain crosses the membrane as a helical span at residues 182–202; it reads FIYATGILNIVMGLVTALYML. Residues 203 to 206 lie on the Extracellular side of the membrane; that stretch reads SRKY. A helical transmembrane segment spans residues 207–227; the sequence is WSGGIVFLIFVVLQALFFWSC. The Cytoplasmic segment spans residues 228–255; that stretch reads RSRIPFSTLMLQTAIDVSKVHGHVYLVS. Residues 256 to 276 form a helical membrane-spanning segment; sequence AVGGVIGTLFAAYWAITLVAV. Residues 277–297 lie on the Extracellular side of the membrane; it reads YVKFEPDPNNAACRNAGGCSS. The chain crosses the membrane as a helical span at residues 298–318; the sequence is GKVIGLIVFITFAGYWISEWL. Residues 319-352 are Cytoplasmic-facing; that stretch reads KNTIHTTVAGIYGSWYFNSRNYPTKVTRGALKRS. The chain crosses the membrane as a helical span at residues 353-373; sequence LTYSFGSISLGSLFIAIINLI. Topologically, residues 374-389 are extracellular; the sequence is RQLAQAAQQNAAQEGD. Residues 390–410 form a helical membrane-spanning segment; that stretch reads ILGTILWCIFGCLIGILDWLV. Topologically, residues 411–451 are cytoplasmic; the sequence is EFINRYAFCHIALYGKAYFAAAKDTWKMVKDRGIDALINEC. Residues 452-472 traverse the membrane as a helical segment; that stretch reads LIGPVLTFGATFVAYACGLIA. Residues 473 to 487 lie on the Extracellular side of the membrane; that stretch reads YLYMVYTKPAYNDGG. Residues 488–508 form a helical membrane-spanning segment; sequence GFTPVVVAFAFLIGLQVCNVF. Topologically, residues 509–554 are cytoplasmic; it reads TTPLTSGIDTIFVAMAWDPEVLMRDHPDLYHRMVQVYPHVQEAIHA.

It belongs to the CTL (choline transporter-like) family.

Its subcellular location is the cell membrane. Its function is as follows. Probably involved in transport through the plasma membrane. This is Protein PNS1 (pns-1) from Neurospora crassa (strain ATCC 24698 / 74-OR23-1A / CBS 708.71 / DSM 1257 / FGSC 987).